Here is a 367-residue protein sequence, read N- to C-terminus: Nuclear hormone receptor-like 1 (367 aa).

A DNA-binding region (nuclear receptor) is located at residues 32–107 (GQPCVVCGDD…NGMTKSLVLN (76 aa)). 2 consecutive NR C4-type zinc fingers follow at residues 35-55 (CVVC…CEGC) and 71-95 (CKSI…FQKC). The 223-residue stretch at 145 to 367 (EFQSRIDQVT…IANILLFKFT (223 aa)) folds into the NR LBD domain.

It belongs to the nuclear hormone receptor family.

It localises to the nucleus. This chain is Nuclear hormone receptor-like 1 (nhr-1), found in Onchocerca volvulus.